Reading from the N-terminus, the 147-residue chain is Nucleoside diphosphate kinase (147 aa).

The ATP site is built by Lys11, Phe59, Arg87, Thr93, Arg104, and Asn114. Catalysis depends on His117, which acts as the Pros-phosphohistidine intermediate.

Belongs to the NDK family. In terms of assembly, homotetramer. Mg(2+) serves as cofactor.

Its subcellular location is the cytoplasm. It catalyses the reaction a 2'-deoxyribonucleoside 5'-diphosphate + ATP = a 2'-deoxyribonucleoside 5'-triphosphate + ADP. It carries out the reaction a ribonucleoside 5'-diphosphate + ATP = a ribonucleoside 5'-triphosphate + ADP. Functionally, major role in the synthesis of nucleoside triphosphates other than ATP. The ATP gamma phosphate is transferred to the NDP beta phosphate via a ping-pong mechanism, using a phosphorylated active-site intermediate. The polypeptide is Nucleoside diphosphate kinase (Anaeromyxobacter dehalogenans (strain 2CP-1 / ATCC BAA-258)).